A 300-amino-acid chain; its full sequence is Ribonuclease HIII (300 aa).

The RNase H type-2 domain maps to 86 to 300 (RPRLGVDESG…FNEICDSASA (215 aa)). A divalent metal cation is bound by residues D92, E93, and D196.

It belongs to the RNase HII family. RnhC subfamily. The cofactor is Mn(2+). It depends on Mg(2+) as a cofactor.

It is found in the cytoplasm. The enzyme catalyses Endonucleolytic cleavage to 5'-phosphomonoester.. Endonuclease that specifically degrades the RNA of RNA-DNA hybrids. This is Ribonuclease HIII from Chlamydia felis (strain Fe/C-56) (Chlamydophila felis).